The sequence spans 206 residues: Small ribosomal subunit protein uS5 (206 aa).

Over residues 1–23 (MTDTPTKQENQSKTENPPSSNAN) the composition is skewed to polar residues. Residues 1-52 (MTDTPTKQENQSKTENPPSSNANEQRRGNRNNDRKRNRRGDSKNERDSEWQE) form a disordered region. Positions 24 to 52 (EQRRGNRNNDRKRNRRGDSKNERDSEWQE) are enriched in basic and acidic residues. Residues 50 to 113 (WQERVVQIRR…SDGKKHLVRV (64 aa)) enclose the S5 DRBM domain.

It belongs to the universal ribosomal protein uS5 family. As to quaternary structure, part of the 30S ribosomal subunit. Contacts proteins S4 and S8.

Functionally, with S4 and S12 plays an important role in translational accuracy. Its function is as follows. Located at the back of the 30S subunit body where it stabilizes the conformation of the head with respect to the body. This chain is Small ribosomal subunit protein uS5, found in Prochlorococcus marinus subsp. pastoris (strain CCMP1986 / NIES-2087 / MED4).